Consider the following 422-residue polypeptide: Adenylosuccinate synthetase (422 aa).

GTP is bound by residues G11 to K17 and G39 to T41. D12 acts as the Proton acceptor in catalysis. D12 and G39 together coordinate Mg(2+). IMP contacts are provided by residues D12–K15, N37–H40, T129, R143, N219, T234, and R298. The active-site Proton donor is the H40. V294–R300 provides a ligand contact to substrate. Residues R300, K326–D328, and G411–G413 each bind GTP.

This sequence belongs to the adenylosuccinate synthetase family. In terms of assembly, homodimer. Requires Mg(2+) as cofactor.

The protein localises to the cytoplasm. The enzyme catalyses IMP + L-aspartate + GTP = N(6)-(1,2-dicarboxyethyl)-AMP + GDP + phosphate + 2 H(+). Its pathway is purine metabolism; AMP biosynthesis via de novo pathway; AMP from IMP: step 1/2. Plays an important role in the de novo pathway and in the salvage pathway of purine nucleotide biosynthesis. Catalyzes the first committed step in the biosynthesis of AMP from IMP. In Talaromyces marneffei (strain ATCC 18224 / CBS 334.59 / QM 7333) (Penicillium marneffei), this protein is Adenylosuccinate synthetase.